The following is a 1403-amino-acid chain: Sushi, nidogen and EGF-like domain-containing protein 1 (1403 aa).

The signal sequence occupies residues 1 to 24 (MRLGAAWALLLAAALGLGTRGVRA). One can recognise an NIDO domain in the interval 103–258 (AFWADVDNRR…GRWAFRIDDA (156 aa)). 3 EGF-like domains span residues 268-309 (TTSV…RRCH), 311-347 (DVNECASHPCQNGGTCTHGVNSFSCQCPAGFKGPTCE), and 349-385 (AQSPCDNKVCQNGGQCQAESSSAVCVCQAGYTGATCE). 18 disulfides stabilise this stretch: C272-C284, C278-C297, C299-C308, C315-C326, C320-C335, C337-C346, C353-C364, C358-C373, C375-C384, C391-C402, C396-C411, C413-C422, C433-C444, C438-C453, C455-C464, C472-C480, C474-C488, and C490-C499. N-linked (GlcNAc...) asparagine glycosylation occurs at N292. Residues 387–423 (DVDECSSDPCQNGGSCVDLVGNYSCICVEPFEGPQCE) form the EGF-like 4; calcium-binding domain. Residue N408 is glycosylated (N-linked (GlcNAc...) asparagine). 2 consecutive EGF-like domains span residues 429 to 465 (VPSPCLSNPCQNGGTCVDADEGYVCECPEGFMGLDCR) and 468 to 500 (ILNDCDCRNGGRCLGANTTLCQCPPGFFGLLCE). The N-linked (GlcNAc...) asparagine glycan is linked to N484. N536 carries N-linked (GlcNAc...) asparagine glycosylation. EGF-like domains are found at residues 541–577 (LPSPCDSDPCFNGGSCDAHEDSYTCECPRGFHGRHCE), 580–616 (RPHLCSSGPCRNGGTCKEMGDEYRCTCPYRFTGRHCE), 619–655 (KPDSCASGPCHNGGTCFHYIGKYKCDCPPGFSGRHCE), and 657–693 (APSPCFRSPCMNGGTCEDLGTDFSCYCQPGYTGHRCQ). Intrachain disulfides connect C545/C556, C550/C565, C567/C576, C584/C595, C589/C604, C606/C615, C623/C634, C628/C643, C645/C654, C661/C672, C666/C681, C683/C692, C698/C739, C724/C751, C757/C768, C762/C777, C779/C788, C795/C806, C800/C815, C817/C826, C833/C844, C838/C853, C855/C864, C871/C882, C876/C891, and C893/C902. One can recognise a Sushi domain in the interval 696–753 (VDCGHPEEVEHATMRFNGTHVGSVALYTCEPGFSLSALSHIRVCQPQGVWSQPPQCIE). Residue N712 is glycosylated (N-linked (GlcNAc...) asparagine). Residues 753–789 (EVDECRSQPCLHGGSCQDLIADYQCLCSPGYEGVHCE) form the EGF-like 11; calcium-binding domain. An EGF-like 12; calcium-binding domain is found at 791–827 (ETDECQAQPCRNGGSCRDLPRAFICQCPEGFVGIHCE). EGF-like domains are found at residues 829-865 (EVDACASSPCQHGGRCEDGGGAYLCVCPEGFFGYNCE) and 867-903 (VSDPCFSSPCGSRGYCLASNGSHSCTCKVGYTGKDCT). N-linked (GlcNAc...) asparagine glycosylation is present at N886. Fibronectin type-III domains follow at residues 908–1006 (PPTA…TRPR), 1007–1105 (PIED…TRPL), and 1106–1200 (PPAN…SPRD). 5 N-linked (GlcNAc...) asparagine glycosylation sites follow: N977, N1015, N1109, N1139, and N1298. An EGF-like 15 domain is found at 1306–1342 (TPGSCSEDACQNGGTCVPGADAHSCDCRPGFKGRHCE). Intrachain disulfides connect C1310/C1321, C1315/C1330, and C1332/C1341.

Post-translationally, phosphorylated on serine and threonine residues. N-glycosylated. As to expression, expressed in lung.

Its subcellular location is the secreted. It localises to the extracellular space. The protein localises to the extracellular matrix. The protein is Sushi, nidogen and EGF-like domain-containing protein 1 of Mus musculus (Mouse).